The chain runs to 417 residues: NADH-quinone oxidoreductase subunit D (417 aa).

The protein belongs to the complex I 49 kDa subunit family. NDH-1 is composed of 14 different subunits. Subunits NuoB, C, D, E, F, and G constitute the peripheral sector of the complex.

It localises to the cell inner membrane. The enzyme catalyses a quinone + NADH + 5 H(+)(in) = a quinol + NAD(+) + 4 H(+)(out). In terms of biological role, NDH-1 shuttles electrons from NADH, via FMN and iron-sulfur (Fe-S) centers, to quinones in the respiratory chain. The immediate electron acceptor for the enzyme in this species is believed to be ubiquinone. Couples the redox reaction to proton translocation (for every two electrons transferred, four hydrogen ions are translocated across the cytoplasmic membrane), and thus conserves the redox energy in a proton gradient. The polypeptide is NADH-quinone oxidoreductase subunit D (Burkholderia orbicola (strain MC0-3)).